The primary structure comprises 77 residues: Small ribosomal subunit protein bS18 (77 aa).

This sequence belongs to the bacterial ribosomal protein bS18 family. Part of the 30S ribosomal subunit. Forms a tight heterodimer with protein bS6.

Functionally, binds as a heterodimer with protein bS6 to the central domain of the 16S rRNA, where it helps stabilize the platform of the 30S subunit. The polypeptide is Small ribosomal subunit protein bS18 (Desulforamulus reducens (strain ATCC BAA-1160 / DSM 100696 / MI-1) (Desulfotomaculum reducens)).